A 207-amino-acid polypeptide reads, in one-letter code: Outer-membrane lipoprotein LolB (207 aa).

Residues 1–21 (MTLPDFRLIRLLPLASLVLTA) form the signal peptide. The N-palmitoyl cysteine moiety is linked to residue Cys-22. A lipid anchor (S-diacylglycerol cysteine) is attached at Cys-22.

This sequence belongs to the LolB family. As to quaternary structure, monomer.

It localises to the cell outer membrane. Plays a critical role in the incorporation of lipoproteins in the outer membrane after they are released by the LolA protein. The polypeptide is Outer-membrane lipoprotein LolB (Citrobacter koseri (strain ATCC BAA-895 / CDC 4225-83 / SGSC4696)).